Reading from the N-terminus, the 286-residue chain is Polyamine aminopropyltransferase (286 aa).

The region spanning 1 to 235 is the PABS domain; that stretch reads MSDYQETLYE…GAMTFAWGAT (235 aa). An S-methyl-5'-thioadenosine-binding site is contributed by glutamine 30. Residues histidine 61 and aspartate 85 each contribute to the spermidine site. Residues glutamate 105 and 137–138 contribute to the S-methyl-5'-thioadenosine site; that span reads DG. Aspartate 155 functions as the Proton acceptor in the catalytic mechanism. 155–158 contributes to the spermidine binding site; that stretch reads DSTD. An S-methyl-5'-thioadenosine-binding site is contributed by proline 162.

It belongs to the spermidine/spermine synthase family. Homodimer or homotetramer.

The protein localises to the cytoplasm. It catalyses the reaction S-adenosyl 3-(methylsulfanyl)propylamine + putrescine = S-methyl-5'-thioadenosine + spermidine + H(+). It functions in the pathway amine and polyamine biosynthesis; spermidine biosynthesis; spermidine from putrescine: step 1/1. Catalyzes the irreversible transfer of a propylamine group from the amino donor S-adenosylmethioninamine (decarboxy-AdoMet) to putrescine (1,4-diaminobutane) to yield spermidine. This Pseudomonas syringae pv. tomato (strain ATCC BAA-871 / DC3000) protein is Polyamine aminopropyltransferase.